A 310-amino-acid polypeptide reads, in one-letter code: Ribosomal RNA small subunit methyltransferase H (310 aa).

S-adenosyl-L-methionine contacts are provided by residues 33–35 (AGH), aspartate 53, phenylalanine 79, aspartate 100, and glutamine 107.

This sequence belongs to the methyltransferase superfamily. RsmH family.

It is found in the cytoplasm. The enzyme catalyses cytidine(1402) in 16S rRNA + S-adenosyl-L-methionine = N(4)-methylcytidine(1402) in 16S rRNA + S-adenosyl-L-homocysteine + H(+). Specifically methylates the N4 position of cytidine in position 1402 (C1402) of 16S rRNA. The chain is Ribosomal RNA small subunit methyltransferase H from Clostridium tetani (strain Massachusetts / E88).